The following is a 147-amino-acid chain: Male-specific protein scotti (147 aa).

The interval 55–93 (PQEPPLGVFPAQGGPNGPPRRRKKRSFYTMTKPTPPCQS) is disordered. Polar residues predominate over residues 82-93 (YTMTKPTPPCQS). Asn128 carries N-linked (GlcNAc...) asparagine glycosylation.

This sequence belongs to the male-specific scotti family. As to expression, expressed in primary spermatocytes and round spermatids. Low expression is seen in very short elongating cysts, but were detected at high levels in a few longer spermatid cysts.

Post-meiotically transcribed gene that has a role in late spermiogenesis; required for actin cone progression during spermatid individualization. This chain is Male-specific protein scotti, found in Drosophila melanogaster (Fruit fly).